A 253-amino-acid chain; its full sequence is MKIDILTLFPEMFYGPLNSSILKKAQEKGIITINYINIRDFTTDRHHQADDKPYGGGAGMVMKVEPIIKAYEAIPKNNSFTIMLSPQGRKFNQKLARELSQKEHLIFICGHYEGIDERVRQLIVDEEISIGDYILTGGEIAAMVIIDAVARLVPGVLGDEVSAEEESFSDQLLEYPHYTRPRNFRGLEVPEVLLSGNHKKIDLWRKKQSLLNTLFRRRDLLKVRGLTKEEKILLWQGFFELAMLIDEIPERSE.

Residues glycine 110 and 130 to 135 (IGDYIL) each bind S-adenosyl-L-methionine.

It belongs to the RNA methyltransferase TrmD family. Homodimer.

It localises to the cytoplasm. It catalyses the reaction guanosine(37) in tRNA + S-adenosyl-L-methionine = N(1)-methylguanosine(37) in tRNA + S-adenosyl-L-homocysteine + H(+). Functionally, specifically methylates guanosine-37 in various tRNAs. This Carboxydothermus hydrogenoformans (strain ATCC BAA-161 / DSM 6008 / Z-2901) protein is tRNA (guanine-N(1)-)-methyltransferase.